Reading from the N-terminus, the 443-residue chain is Transcriptional adapter 2-alpha (443 aa).

Serine 6 carries the post-translational modification Phosphoserine. The segment at 12 to 69 (SDKPPCRGCSSYLTEPYIKCAECGPPPFFLCLQCFTRGFEYKKHQSDHTYEIMTSDFP) adopts a ZZ-type zinc-finger fold. Positions 17, 20, 31, 34, 42, 45, 55, and 59 each coordinate Zn(2+). In terms of domain architecture, SANT spans 70 to 122 (VLDPSWTAQEEMALLEAVMDCGFGNWQDVANQMCTKTKEECEKHYMKHFINNP). Glycyl lysine isopeptide (Lys-Gly) (interchain with G-Cter in SUMO2) cross-links involve residues lysine 132 and lysine 138. Positions 356 to 443 (NSGRRSAPPL…LIREGYITKA (88 aa)) constitute an SWIRM domain. A DNA-binding region spans residues 426 to 435 (KTRKIYDFLI).

In terms of assembly, interacts with GCN5. Interacts with NR3C1. Associated with the P/CAF protein in the PCAF complex. Component of the PCAF complex, at least composed of TADA2L/ADA2, TADA3L/ADA3, TAF5L/PAF65-beta, TAF6L/PAF65-alpha, TAF10/TAFII30, TAF12/TAFII20, TAF9/TAFII31 and TRRAP. Component of the ADA2A-containing complex (ATAC), composed of KAT14, KAT2A, TADA2L, TADA3L, ZZ3, MBIP, WDR5, YEATS2, CCDC101 and DR1. Interacts with CCDC134.

The protein resides in the nucleus. It is found in the chromosome. In terms of biological role, component of the ATAC complex, a complex with histone acetyltransferase activity on histones H3 and H4. Required for the function of some acidic activation domains, which activate transcription from a distant site. Binds double-stranded DNA. Binds dinucleosomes, probably at the linker region between neighboring nucleosomes. Plays a role in chromatin remodeling. May promote TP53/p53 'Lys-321' acetylation, leading to reduced TP53 stability and transcriptional activity. May also promote XRCC6 acetylation thus facilitating cell apoptosis in response to DNA damage. This chain is Transcriptional adapter 2-alpha (Tada2a), found in Mus musculus (Mouse).